The following is a 102-amino-acid chain: Small ribosomal subunit protein bS6 (102 aa).

The protein belongs to the bacterial ribosomal protein bS6 family.

Functionally, binds together with bS18 to 16S ribosomal RNA. This chain is Small ribosomal subunit protein bS6 (rpsF), found in Deinococcus radiodurans (strain ATCC 13939 / DSM 20539 / JCM 16871 / CCUG 27074 / LMG 4051 / NBRC 15346 / NCIMB 9279 / VKM B-1422 / R1).